Reading from the N-terminus, the 502-residue chain is Glycerol kinase (502 aa).

Residue threonine 13 coordinates ADP. Threonine 13, threonine 14, and serine 15 together coordinate ATP. Position 13 (threonine 13) interacts with sn-glycerol 3-phosphate. Residue arginine 17 coordinates ADP. 4 residues coordinate sn-glycerol 3-phosphate: arginine 83, glutamate 84, tyrosine 136, and aspartate 246. Residues arginine 83, glutamate 84, tyrosine 136, aspartate 246, and glutamine 247 each coordinate glycerol. Threonine 268 and glycine 311 together coordinate ADP. ATP is bound by residues threonine 268, glycine 311, glutamine 315, and glycine 412. Residues glycine 412 and asparagine 416 each contribute to the ADP site.

The protein belongs to the FGGY kinase family.

It carries out the reaction glycerol + ATP = sn-glycerol 3-phosphate + ADP + H(+). It participates in polyol metabolism; glycerol degradation via glycerol kinase pathway; sn-glycerol 3-phosphate from glycerol: step 1/1. With respect to regulation, inhibited by fructose 1,6-bisphosphate (FBP). Key enzyme in the regulation of glycerol uptake and metabolism. Catalyzes the phosphorylation of glycerol to yield sn-glycerol 3-phosphate. In Francisella tularensis subsp. mediasiatica (strain FSC147), this protein is Glycerol kinase.